The sequence spans 317 residues: Aspartate carbamoyltransferase catalytic subunit (317 aa).

The carbamoyl phosphate site is built by R66 and T67. K94 contributes to the L-aspartate binding site. Residues R116, H144, and Q147 each coordinate carbamoyl phosphate. L-aspartate contacts are provided by R177 and R231. Positions 272 and 273 each coordinate carbamoyl phosphate.

This sequence belongs to the aspartate/ornithine carbamoyltransferase superfamily. ATCase family. As to quaternary structure, heterododecamer (2C3:3R2) of six catalytic PyrB chains organized as two trimers (C3), and six regulatory PyrI chains organized as three dimers (R2).

It catalyses the reaction carbamoyl phosphate + L-aspartate = N-carbamoyl-L-aspartate + phosphate + H(+). It participates in pyrimidine metabolism; UMP biosynthesis via de novo pathway; (S)-dihydroorotate from bicarbonate: step 2/3. Its function is as follows. Catalyzes the condensation of carbamoyl phosphate and aspartate to form carbamoyl aspartate and inorganic phosphate, the committed step in the de novo pyrimidine nucleotide biosynthesis pathway. This chain is Aspartate carbamoyltransferase catalytic subunit, found in Nitrobacter hamburgensis (strain DSM 10229 / NCIMB 13809 / X14).